A 306-amino-acid chain; its full sequence is Abnormal cell migration protein 21 (306 aa).

TSP type-1 domains lie at 55–102 (PGGW…AISS) and 109–155 (FGSW…DECP). Tryptophan 58 and tryptophan 61 each carry a C-linked (Man) tryptophan glycan. 3 cysteine pairs are disulfide-bonded: cysteine 121–cysteine 149, cysteine 123–cysteine 154, and cysteine 134–cysteine 139. A helical membrane pass occupies residues 240–260 (CLPLHFAIPIFCFCILTGFLL).

Glycosylated via C-mannosylation by dpy-19 at Trp-58 and Trp-61.

The protein localises to the membrane. Functionally, required for determination of left/right asymmetry in nervous system. Acts together with unc-40 to control an initial left-right asymmetric polarization of the Q neuroblasts. Mig-21 and unc-40 may control the asymmetry in Wnt signaling response by restricting posterior polarization to one of the 2 Q neuroblasts. Involved in left-side QL posterior migration. In right-side QR, unc-40 and mig-21 pathways mutually inhibit each other in posterior migration, allowing anterior QR migration. The protein is Abnormal cell migration protein 21 (mig-21) of Caenorhabditis elegans.